The sequence spans 156 residues: SsrA-binding protein (156 aa).

It belongs to the SmpB family.

It localises to the cytoplasm. Required for rescue of stalled ribosomes mediated by trans-translation. Binds to transfer-messenger RNA (tmRNA), required for stable association of tmRNA with ribosomes. tmRNA and SmpB together mimic tRNA shape, replacing the anticodon stem-loop with SmpB. tmRNA is encoded by the ssrA gene; the 2 termini fold to resemble tRNA(Ala) and it encodes a 'tag peptide', a short internal open reading frame. During trans-translation Ala-aminoacylated tmRNA acts like a tRNA, entering the A-site of stalled ribosomes, displacing the stalled mRNA. The ribosome then switches to translate the ORF on the tmRNA; the nascent peptide is terminated with the 'tag peptide' encoded by the tmRNA and targeted for degradation. The ribosome is freed to recommence translation, which seems to be the essential function of trans-translation. In Paracoccus denitrificans (strain Pd 1222), this protein is SsrA-binding protein.